A 98-amino-acid polypeptide reads, in one-letter code: Dehydrin HIRD11 (98 aa).

The tract at residues 1-98 (MAGLINKIGD…HSSSSDSDSD (98 aa)) is disordered. Residues 19–72 (KEGEHKKEEEHKKHVDEHKSGEHKEGIVDKIKDKIHGGEGKSHDGEGKSHDGEK) show a composition bias toward basic and acidic residues. Over residues 73–82 (KKKKDKKEKK) the composition is skewed to basic residues.

Belongs to the KS-type dehydrin family. As to quaternary structure, interacts with PXL1. Phosphorylated in vivo. Phosphorylated in vitro by PXL1. In terms of tissue distribution, highly expressed in the cambial zone of the stem vasculature (at protein level). Expressed in roots, rosettes leaves, stems, cauline leaves, flowers and siliques.

Its subcellular location is the cytoplasm. It is found in the nucleus. Functionally, intrinsically disordered and metal-binding protein. Binds to the divalent cations cobalt, nickel, copper and zinc, but not to magnesium, calcium, manganese or cadmium. Binding to metal ions decreases disordered state, decreases susceptibility to trypsin and promotes self-association. Can reduce the formation of reactive oxygen species (ROS) in a copper-ascorbate in vitro system. In Arabidopsis thaliana (Mouse-ear cress), this protein is Dehydrin HIRD11.